Reading from the N-terminus, the 202-residue chain is Urease accessory protein UreG (202 aa).

11–18 contacts GTP; that stretch reads GPVGSGKT.

The protein belongs to the SIMIBI class G3E GTPase family. UreG subfamily. In terms of assembly, homodimer. UreD, UreF and UreG form a complex that acts as a GTP-hydrolysis-dependent molecular chaperone, activating the urease apoprotein by helping to assemble the nickel containing metallocenter of UreC. The UreE protein probably delivers the nickel.

The protein localises to the cytoplasm. In terms of biological role, facilitates the functional incorporation of the urease nickel metallocenter. This process requires GTP hydrolysis, probably effectuated by UreG. The sequence is that of Urease accessory protein UreG from Magnetococcus marinus (strain ATCC BAA-1437 / JCM 17883 / MC-1).